The primary structure comprises 790 residues: Vacuolar protein sorting-associated protein 35C (790 aa).

N-acetylmethionine is present on Met-1.

It belongs to the VPS35 family. In terms of assembly, component of the retromer complex which consists of VPS29 (MAG1), VPS26 (VPS26A or VPS26B), VPS35 (VPS35A or VPS35B or VPS35C), VPS5/17 (SNX1 or SNX2A or SNX2B). Component of a retromer subcomplex consisting of VPS29 (MAG1), VPS26 (VPS26A or VPS26B), VPS35 (VPS35A or VPS35B or VPS35C).

The protein localises to the cytoplasm. The protein resides in the endosome membrane. It is found in the prevacuolar compartment membrane. It localises to the golgi apparatus. Its subcellular location is the trans-Golgi network membrane. Plays a role in vesicular protein sorting. Component of the membrane-associated retromer complex which is essential in endosome-to-Golgi retrograde transport. Also involved in the efficient sorting of seed storage proteins. The VPS29-VPS26-VPS35 subcomplex may be involved in recycling of specific cargos from endosome to the plasma membrane. The sequence is that of Vacuolar protein sorting-associated protein 35C (VPS35C) from Arabidopsis thaliana (Mouse-ear cress).